A 542-amino-acid polypeptide reads, in one-letter code: 2,3-bisphosphoglycerate-independent phosphoglycerate mutase (542 aa).

The Mn(2+) site is built by Asp13 and Ser63. Ser63 serves as the catalytic Phosphoserine intermediate. Substrate-binding positions include His124, 154–155, Arg186, Arg192, 263–266, and Lys357; these read RD and RADR. 5 residues coordinate Mn(2+): Asp424, His428, Asp465, His466, and His484.

It belongs to the BPG-independent phosphoglycerate mutase family. As to quaternary structure, monomer. Requires Mn(2+) as cofactor.

The enzyme catalyses (2R)-2-phosphoglycerate = (2R)-3-phosphoglycerate. It participates in carbohydrate degradation; glycolysis; pyruvate from D-glyceraldehyde 3-phosphate: step 3/5. In terms of biological role, catalyzes the interconversion of 2-phosphoglycerate and 3-phosphoglycerate. This is 2,3-bisphosphoglycerate-independent phosphoglycerate mutase from Herpetosiphon aurantiacus (strain ATCC 23779 / DSM 785 / 114-95).